The following is a 136-amino-acid chain: Peptide methionine sulfoxide reductase MsrB (136 aa).

The region spanning glutamate 6–glutamate 128 is the MsrB domain. Cysteine 45, cysteine 48, cysteine 94, and cysteine 97 together coordinate Zn(2+). Cysteine 117 functions as the Nucleophile in the catalytic mechanism.

This sequence belongs to the MsrB Met sulfoxide reductase family. It depends on Zn(2+) as a cofactor.

The catalysed reaction is L-methionyl-[protein] + [thioredoxin]-disulfide + H2O = L-methionyl-(R)-S-oxide-[protein] + [thioredoxin]-dithiol. This chain is Peptide methionine sulfoxide reductase MsrB, found in Photorhabdus laumondii subsp. laumondii (strain DSM 15139 / CIP 105565 / TT01) (Photorhabdus luminescens subsp. laumondii).